The primary structure comprises 4246 residues: Intermembrane lipid transfer protein vps13F (4246 aa).

In terms of domain architecture, Chorein N-terminal spans 2–113 (FESIVSNLLT…LLLQKKLKKL (112 aa)). Disordered stretches follow at residues 141-271 (IKEK…EDED), 401-420 (PKKS…PPPK), 591-759 (KAED…SILG), 914-944 (VSSS…EKKL), 964-1014 (KKSK…TNDE), 1217-1251 (QAQQ…IKSP), 1356-1379 (ISTH…DRVD), 1395-1436 (YNGV…KSKK), 1622-1683 (REKR…KSQS), 2101-2131 (LESL…QQQQ), 2211-2237 (HHSK…EKEK), 2471-2513 (QQQH…KSKQ), 2704-2756 (LSTS…QTTK), 3421-3449 (IDDD…TSPL), 3611-3652 (KTLN…NNQN), and 3794-3813 (NNNN…NIDE). The span at 168-201 (NASPVNSNNNNNNNSNLVSESNIPSSSSSSSSSL) shows a compositional bias: low complexity. Residues 207-217 (NSSKDANKSDD) are compositionally biased toward basic and acidic residues. Acidic residues predominate over residues 218–271 (TDMDVDDDDEFQEATEGDYDNEEEQDDHDEEDDLSDDDDDDDDEEDDYEMEDED). Composition is skewed to low complexity over residues 401–413 (PKKS…TTTP) and 597–658 (QQQQ…SNST). Residues 659-668 (DSKDIMKSSG) are compositionally biased toward basic and acidic residues. Residues 669–680 (DKNVNNNNNMGD) are compositionally biased toward low complexity. The segment covering 681–702 (NENKDNIDKKEENKNDDQDNKN) has biased composition (basic and acidic residues). 2 stretches are compositionally biased toward low complexity: residues 725–747 (SGGW…QQQQ) and 914–924 (VSSSPSPVSSP). Composition is skewed to basic and acidic residues over residues 925–944 (SRDK…EKKL) and 987–1001 (DKYS…REES). A compositionally biased stretch (low complexity) spans 1217-1241 (QAQQQAQQQQQSQHPSSNDDNSSSN). A compositionally biased stretch (acidic residues) spans 1400 to 1409 (SDDDNNDDEN). 2 stretches are compositionally biased toward basic and acidic residues: residues 1410-1431 (DKTT…DSLK) and 1622-1634 (REKR…DKDN). A compositionally biased stretch (low complexity) spans 1644-1670 (QQSIPQKQQQQQQQQQQQQQQQQQQQQ). 5 stretches are compositionally biased toward low complexity: residues 2471–2506 (QQQH…NNNN), 2705–2755 (STST…TQTT), 3430–3449 (DSGS…TSPL), 3613–3652 (LNNN…NNQN), and 3794–3809 (NNNN…NDFN).

Belongs to the VPS13 family.

It is found in the membrane. Its function is as follows. Mediates the transfer of lipids between membranes at organelle contact sites. The polypeptide is Intermembrane lipid transfer protein vps13F (vps13F) (Dictyostelium discoideum (Social amoeba)).